Here is a 533-residue protein sequence, read N- to C-terminus: Cytochrome P450 monooxygenase ltmK (533 aa).

A helical transmembrane segment spans residues 27–47; the sequence is VHWLQVIVALLVLIVCIFLYW. Residue asparagine 116 is glycosylated (N-linked (GlcNAc...) asparagine). Cysteine 473 lines the heme pocket. Residue asparagine 528 is glycosylated (N-linked (GlcNAc...) asparagine).

Belongs to the cytochrome P450 family. Requires heme as cofactor.

The protein resides in the membrane. It functions in the pathway secondary metabolite biosynthesis. Its function is as follows. Cytochrome P450 monooxygenase; part of the gene clusters that mediates the biosynthesis of lolitrems, indole-diterpene mycotoxins that are potent tremorgens in mammals, and are synthesized by clavicipitaceous fungal endophytes in association with their grass hosts. The geranylgeranyl diphosphate (GGPP) synthase ltmG is proposed to catalyze the first step in lolitrem biosynthesis. LtmG catalyzes a series of iterative condensations of isopentenyl diphosphate (IPP) with dimethylallyl diphosphate (DMAPP), geranyl diphosphate (GPP), and farnesyl diphosphate (FPP), to form GGPP. GGPP then condenses with indole-3-glycerol phosphate to form 3-geranylgeranylindole, an acyclic intermediate, to be incorporated into paxilline. Either ltmG or ltmC could be responsible for this step, as both are putative prenyl transferases. The FAD-dependent monooxygenase ltmM then catalyzes the epoxidation of the two terminal alkenes of the geranylgeranyl moiety, which is subsequently cyclized by ltmB, to paspaline. The cytochrome P450 monooxygenases ltmQ and ltmP can sequentially oxidize paspaline to terpendole E and terpendole F. Alternatively, ltmP converts paspaline to an intermediate which is oxidized by ltmQ to terpendole F. LtmF, ltmK, ltmE and ltmJ appear to be unique to the epichloe endophytes. The prenyltransferase ltmF is involved in the 27-hydroxyl-O-prenylation. The cytochrome P450 monooxygenase ltmK is required for the oxidative acetal ring formation. The multi-functional prenyltransferase ltmE is required for C20- and C21-prenylations of the indole ring of paspalanes and acts together with the cytochrome P450 monooxygenase ltmJ to yield lolitremanes by multiple oxidations and ring closures. The stereoisomer pairs of lolitriol and lolitrem N or lolitrem B and lolitrem F may be attributed to variations in the way in which ring closure can occur under the action of ltmJ. While the major product of this pathway is lolitrem B, the prenyl transferases and cytochrome P450 monooxygenases identified in this pathway have a remarkable versatility in their regio- and stereo-specificities to generate a diverse range of metabolites that are products of a metabolic grid rather than a linear pathway. The protein is Cytochrome P450 monooxygenase ltmK of Epichloe festucae var. lolii (Neotyphodium lolii).